The following is a 474-amino-acid chain: tRNA-2-methylthio-N(6)-dimethylallyladenosine synthase (474 aa).

An MTTase N-terminal domain is found at 3–120; it reads KKLHIKTWGC…LPEMINSVRG (118 aa). Cys-12, Cys-49, Cys-83, Cys-157, Cys-161, and Cys-164 together coordinate [4Fe-4S] cluster. Residues 143–375 form the Radical SAM core domain; the sequence is RAEGPTAFVS…QERINQQAMA (233 aa). The TRAM domain maps to 378 to 441; it reads RRMLGTTQRI…PNSLRGKVVR (64 aa).

This sequence belongs to the methylthiotransferase family. MiaB subfamily. As to quaternary structure, monomer. Requires [4Fe-4S] cluster as cofactor.

Its subcellular location is the cytoplasm. It carries out the reaction N(6)-dimethylallyladenosine(37) in tRNA + (sulfur carrier)-SH + AH2 + 2 S-adenosyl-L-methionine = 2-methylsulfanyl-N(6)-dimethylallyladenosine(37) in tRNA + (sulfur carrier)-H + 5'-deoxyadenosine + L-methionine + A + S-adenosyl-L-homocysteine + 2 H(+). Catalyzes the methylthiolation of N6-(dimethylallyl)adenosine (i(6)A), leading to the formation of 2-methylthio-N6-(dimethylallyl)adenosine (ms(2)i(6)A) at position 37 in tRNAs that read codons beginning with uridine. The sequence is that of tRNA-2-methylthio-N(6)-dimethylallyladenosine synthase from Escherichia coli (strain SMS-3-5 / SECEC).